Reading from the N-terminus, the 566-residue chain is Urease subunit alpha (566 aa).

The region spanning 129–566 is the Urease domain; the sequence is GGVDTHIHFI…LPLAQRYFLF (438 aa). His134, His136, and Lys217 together coordinate Ni(2+). Position 217 is an N6-carboxylysine (Lys217). Residue His219 participates in substrate binding. Positions 246 and 272 each coordinate Ni(2+). The active-site Proton donor is His320. Asp360 is a Ni(2+) binding site.

It belongs to the metallo-dependent hydrolases superfamily. Urease alpha subunit family. In terms of assembly, heterotrimer of UreA (gamma), UreB (beta) and UreC (alpha) subunits. Three heterotrimers associate to form the active enzyme. The cofactor is Ni cation. In terms of processing, carboxylation allows a single lysine to coordinate two nickel ions.

It localises to the cytoplasm. It catalyses the reaction urea + 2 H2O + H(+) = hydrogencarbonate + 2 NH4(+). The protein operates within nitrogen metabolism; urea degradation; CO(2) and NH(3) from urea (urease route): step 1/1. In Janthinobacterium sp. (strain Marseille) (Minibacterium massiliensis), this protein is Urease subunit alpha.